The following is a 252-amino-acid chain: 5'-nucleotidase SurE (252 aa).

The a divalent metal cation site is built by Asp8, Asp9, Ser39, and Asn91.

The protein belongs to the SurE nucleotidase family. A divalent metal cation is required as a cofactor.

Its subcellular location is the cytoplasm. The catalysed reaction is a ribonucleoside 5'-phosphate + H2O = a ribonucleoside + phosphate. Functionally, nucleotidase that shows phosphatase activity on nucleoside 5'-monophosphates. This is 5'-nucleotidase SurE from Variovorax paradoxus (strain S110).